The primary structure comprises 255 residues: Wtf element wtf15 (255 aa).

Residues 19-78 (KAGHEIDLEGSPPSEHNSEEKSTLPSNSDILTSANPVSQASETPDHSIESNTGSTQSPTS) are disordered. Composition is skewed to polar residues over residues 41 to 60 (TLPSNSDILTSANPVSQASE) and 67 to 78 (ESNTGSTQSPTS). Helical transmembrane passes span 85–105 (FSFCIVYYSYFAIVVLGCVLP), 112–132 (FLIAFLVIFGIISVILFSGSI), 162–182 (FLKTFVFYGLLKTIEHFLVLL), and 187–208 (WGWKCSTLSSILTPVSCISFCL).

Belongs to the WTF family.

Its subcellular location is the spore membrane. Its function is as follows. May act in meiotic drive. The protein is Wtf element wtf15 of Schizosaccharomyces pombe (strain 972 / ATCC 24843) (Fission yeast).